The chain runs to 143 residues: Large ribosomal subunit protein uL15 (143 aa).

Residues 1–59 (MELNGIKPADGAKHYKRRVGRGIGSGIGKTAGRGHKGQKSRAGGYHKVGFEGGQMPMQR) form a disordered region. Residues 21–31 (RGIGSGIGKTA) show a composition bias toward gly residues.

This sequence belongs to the universal ribosomal protein uL15 family. Part of the 50S ribosomal subunit.

Functionally, binds to the 23S rRNA. The protein is Large ribosomal subunit protein uL15 of Albidiferax ferrireducens (strain ATCC BAA-621 / DSM 15236 / T118) (Rhodoferax ferrireducens).